The sequence spans 263 residues: tRNA (guanine-N(7)-)-methyltransferase (263 aa).

The span at 1–10 (MLPQDPSTEP) shows a compositional bias: polar residues. The disordered stretch occupies residues 1 to 38 (MLPQDPSTEPTPADDAAPVDSAGQASAPSPADPEGVAH). Residues Glu91, Glu116, Asp143, and Asp166 each coordinate S-adenosyl-L-methionine. The active site involves Asp166. Residue Lys170 coordinates substrate. The interaction with RNA stretch occupies residues 172-177 (RHNKRR). Substrate contacts are provided by residues Asp202 and 240–243 (TKFE).

The protein belongs to the class I-like SAM-binding methyltransferase superfamily. TrmB family.

The enzyme catalyses guanosine(46) in tRNA + S-adenosyl-L-methionine = N(7)-methylguanosine(46) in tRNA + S-adenosyl-L-homocysteine. It participates in tRNA modification; N(7)-methylguanine-tRNA biosynthesis. Catalyzes the formation of N(7)-methylguanine at position 46 (m7G46) in tRNA. In Cupriavidus necator (strain ATCC 17699 / DSM 428 / KCTC 22496 / NCIMB 10442 / H16 / Stanier 337) (Ralstonia eutropha), this protein is tRNA (guanine-N(7)-)-methyltransferase.